Consider the following 138-residue polypeptide: ATP synthase epsilon chain (138 aa).

Belongs to the ATPase epsilon chain family. As to quaternary structure, F-type ATPases have 2 components, CF(1) - the catalytic core - and CF(0) - the membrane proton channel. CF(1) has five subunits: alpha(3), beta(3), gamma(1), delta(1), epsilon(1). CF(0) has three main subunits: a, b and c.

It localises to the cell inner membrane. Functionally, produces ATP from ADP in the presence of a proton gradient across the membrane. In Geobacter sp. (strain M21), this protein is ATP synthase epsilon chain.